The primary structure comprises 263 residues: Transmembrane protein 176B (263 aa).

4 helical membrane passes run Leu-61–Phe-81, Ala-89–Ile-109, Leu-125–Ile-145, and Leu-197–Val-217. Positions Lys-242 to Pro-263 are disordered. A phosphoserine mark is found at Ser-249 and Ser-253.

It belongs to the TMEM176 family. Expressed in spleen by a variety of myeloid cells including macrophages and dendritic cells (at protein level). Ubiquitously expressed with higher expression in lymphoid tissues.

It is found in the nucleus membrane. Its function is as follows. Required for the development of cerebellar granule cells. May play a role in the process of maturation of dendritic cells. In Rattus norvegicus (Rat), this protein is Transmembrane protein 176B (Tmem176b).